The sequence spans 218 residues: Probable glutamine ABC transporter permease protein GlnP (218 aa).

The next 3 membrane-spanning stretches (helical) occupy residues 19–39, 65–85, and 188–208; these read FLVTLYVAFISIILSFFFGLI, LPLLLIIFFTFFALPEIGIKL, and FFPIFLLAALMYFAVNYSLSL. The region spanning 19–210 is the ABC transmembrane type-1 domain; sequence FLVTLYVAFI…AVNYSLSLAA (192 aa).

The protein belongs to the binding-protein-dependent transport system permease family. The complex is composed of two ATP-binding proteins (GlnQ), two transmembrane proteins (GlnM and GlnP) and a solute-binding protein (GlnH).

The protein resides in the cell membrane. Functionally, part of the ABC transporter complex GlnHMPQ involved in glutamine transport. Probably responsible for the translocation of the substrate across the membrane. The sequence is that of Probable glutamine ABC transporter permease protein GlnP (glnP) from Bacillus subtilis (strain 168).